Reading from the N-terminus, the 230-residue chain is Probable tetraspanin tspD (230 aa).

The Cytoplasmic portion of the chain corresponds to 1-20 (MVEYLPSTPRYLKVPLIILN). Residues 21–41 (VILWLLGLVLVIIGGICVGFF) form a helical membrane-spanning segment. The Extracellular portion of the chain corresponds to 42 to 65 (SRFKELQEVGGVSESIKSISVSLP). The helical transmembrane segment at 66–86 (AGVLSIGIFFMVLTVAGCIVA) threads the bilayer. The Cytoplasmic portion of the chain corresponds to 87-90 (YKEK). The helical transmembrane segment at 91 to 111 (MVGLVFYTILMLVLLVVLIGI) threads the bilayer. The Extracellular portion of the chain corresponds to 112–200 (GGEALTYHNA…VNSKLYLVGS (89 aa)). 4 N-linked (GlcNAc...) asparagine glycosylation sites follow: Asn-133, Asn-138, Asn-163, and Asn-179. Residues 201-221 (AGVAIGVIELVSLMFALFLIV) traverse the membrane as a helical segment. Topologically, residues 222-230 (RLYKSNSYR) are cytoplasmic.

This sequence belongs to the tetraspanin (TM4SF) family.

The protein localises to the membrane. This chain is Probable tetraspanin tspD (tspD), found in Dictyostelium discoideum (Social amoeba).